A 193-amino-acid chain; its full sequence is Imidazoleglycerol-phosphate dehydratase (193 aa).

It belongs to the imidazoleglycerol-phosphate dehydratase family.

It localises to the cytoplasm. The catalysed reaction is D-erythro-1-(imidazol-4-yl)glycerol 3-phosphate = 3-(imidazol-4-yl)-2-oxopropyl phosphate + H2O. Its pathway is amino-acid biosynthesis; L-histidine biosynthesis; L-histidine from 5-phospho-alpha-D-ribose 1-diphosphate: step 6/9. This is Imidazoleglycerol-phosphate dehydratase from Methanospirillum hungatei JF-1 (strain ATCC 27890 / DSM 864 / NBRC 100397 / JF-1).